The primary structure comprises 219 residues: MKAINIALDGPAAAGKSTIAKRVASELSMIYVDTGAMYRALTYKYLKLNKTEDFAKLVDQTTLDLTYKADKGQCVILDNEDVTDFLRNNDVTQHVSYVASKEPVRSFAVKKQKELAAEKGIVMDGRDIGTVVLPDADLKVYMIASVEERAERRYKDNQLRGIESNFEDLKRDIEARDQYDMNREISPLRKADDAVTLDTTGKTIEEVTDEILAMVSQIK.

Residue 10–18 (GPAAAGKST) coordinates ATP.

It belongs to the cytidylate kinase family. Type 1 subfamily.

Its subcellular location is the cytoplasm. The catalysed reaction is CMP + ATP = CDP + ADP. The enzyme catalyses dCMP + ATP = dCDP + ADP. The protein is Cytidylate kinase of Staphylococcus aureus (strain MRSA252).